A 428-amino-acid chain; its full sequence is Serine--tRNA ligase (428 aa).

Thr-235–Glu-237 contacts L-serine. Arg-266–Glu-268 serves as a coordination point for ATP. Glu-289 is a binding site for L-serine. Glu-353–Ser-356 lines the ATP pocket. L-serine is bound at residue Ser-389.

This sequence belongs to the class-II aminoacyl-tRNA synthetase family. Type-1 seryl-tRNA synthetase subfamily. Homodimer. The tRNA molecule binds across the dimer.

The protein resides in the cytoplasm. It carries out the reaction tRNA(Ser) + L-serine + ATP = L-seryl-tRNA(Ser) + AMP + diphosphate + H(+). The enzyme catalyses tRNA(Sec) + L-serine + ATP = L-seryl-tRNA(Sec) + AMP + diphosphate + H(+). The protein operates within aminoacyl-tRNA biosynthesis; selenocysteinyl-tRNA(Sec) biosynthesis; L-seryl-tRNA(Sec) from L-serine and tRNA(Sec): step 1/1. In terms of biological role, catalyzes the attachment of serine to tRNA(Ser). Is also able to aminoacylate tRNA(Sec) with serine, to form the misacylated tRNA L-seryl-tRNA(Sec), which will be further converted into selenocysteinyl-tRNA(Sec). This Shewanella baltica (strain OS223) protein is Serine--tRNA ligase.